The following is a 235-amino-acid chain: Homeobox protein Nkx-2.8 (235 aa).

The span at 51–67 (SDESGLETSPADSSQLA) shows a compositional bias: polar residues. The disordered stretch occupies residues 51–86 (SDESGLETSPADSSQLASLRRESPGSDPEKRRKRRV). Over residues 69–80 (LRRESPGSDPEK) the composition is skewed to basic and acidic residues. Residues 81 to 140 (RRKRRVLFSKAQTLELERRFRQQRYLSAPEREQLARLLRLTPTQVKIWFQNHRYKLKRGR) constitute a DNA-binding region (homeobox).

Belongs to the NK-2 homeobox family. Prominent expression in ventral brain and neural tube structures.

It localises to the nucleus. Its function is as follows. Possible role in the specification of a distinct subset of neurons. The protein is Homeobox protein Nkx-2.8 (Nkx2-8) of Mus musculus (Mouse).